Consider the following 364-residue polypeptide: DNA replication and repair protein RecF (364 aa).

Residue 30 to 37 (GNNGMGKT) coordinates ATP.

Belongs to the RecF family.

Its subcellular location is the cytoplasm. The RecF protein is involved in DNA metabolism; it is required for DNA replication and normal SOS inducibility. RecF binds preferentially to single-stranded, linear DNA. It also seems to bind ATP. This is DNA replication and repair protein RecF from Porphyromonas gingivalis (strain ATCC BAA-308 / W83).